The chain runs to 295 residues: uncharacterized protein (295 aa).

The signal sequence occupies residues 1–19 (MFRKFLFIPLLIVTSLVKA). The disordered stretch occupies residues 274 to 295 (KRNNPPLKNNNAKSKNSYETHK). The span at 276 to 288 (NNPPLKNNNAKSK) shows a compositional bias: low complexity.

This is an uncharacterized protein from Rickettsia typhi (strain ATCC VR-144 / Wilmington).